The sequence spans 117 residues: Large ribosomal subunit protein uL18 (117 aa).

This sequence belongs to the universal ribosomal protein uL18 family. In terms of assembly, part of the 50S ribosomal subunit; part of the 5S rRNA/L5/L18/L25 subcomplex. Contacts the 5S and 23S rRNAs.

Its function is as follows. This is one of the proteins that bind and probably mediate the attachment of the 5S RNA into the large ribosomal subunit, where it forms part of the central protuberance. This chain is Large ribosomal subunit protein uL18, found in Photorhabdus laumondii subsp. laumondii (strain DSM 15139 / CIP 105565 / TT01) (Photorhabdus luminescens subsp. laumondii).